We begin with the raw amino-acid sequence, 168 residues long: Ribosome maturation factor RimM (168 aa).

In terms of domain architecture, PRC barrel spans 96–168 (EDEYFITDLI…VMIVRLLEGL (73 aa)).

The protein belongs to the RimM family. In terms of assembly, binds ribosomal protein uS19.

It is found in the cytoplasm. Functionally, an accessory protein needed during the final step in the assembly of 30S ribosomal subunit, possibly for assembly of the head region. Essential for efficient processing of 16S rRNA. May be needed both before and after RbfA during the maturation of 16S rRNA. It has affinity for free ribosomal 30S subunits but not for 70S ribosomes. The protein is Ribosome maturation factor RimM of Caldanaerobacter subterraneus subsp. tengcongensis (strain DSM 15242 / JCM 11007 / NBRC 100824 / MB4) (Thermoanaerobacter tengcongensis).